A 298-amino-acid chain; its full sequence is Glyoxalase domain-containing protein 4 (298 aa).

Residues 5–130 (RALHFVFKVK…GGYKFYLQDR (126 aa)) form the VOC 1 domain. K109 bears the N6-succinyllysine mark. S131 is subject to Phosphoserine. The 122-residue stretch at 137–258 (PVLKVTLAVS…DGHEICFVGD (122 aa)) folds into the VOC 2 domain. K273 is subject to N6-succinyllysine.

The protein belongs to the glyoxalase I family. Interacts with NUDT9.

It localises to the mitochondrion. The chain is Glyoxalase domain-containing protein 4 (Glod4) from Mus musculus (Mouse).